The following is a 485-amino-acid chain: MTITPQNLIALLPLLIVGLTVVVVMLSIAWRRNHFLNATLSVIGLNAALVSLWFVGQVGAMDVTPLMRVDGFAMLYTGLVLLASLATCTFAYPWLEGYNDNKDEFYLLVLIAALGGILLANANHLASLFLGIELISLPLFGLVGYAFRQKRSLEASIKYTILSAAASSFLLFGMALVYAQSGDLSFVALGKNLGDGMLNEPLLLAGFGLMIVGLGFKLSLVPFHLWTPDVYQGAPAPVSTFLATASKIVIFGVVMRLFLYAPVGDSEAIRVVLAIIAFASIIFGNLMALSQTNIKRLLGYSSISHLGYLLVALIALQTGEMSMEAVGVYLAGYLFSSLGAFGVVSLMSSPYRGPDADSLFSYRGLFWHRPILAAVMTVMMLSLAGIPMTLGFIGKFYVLAVGVQAHLWWLVGAVVVGSAIGLYYYLRVAVSLYLHAPEQPGRDAPSNWQYSAGGIVVLISALLVLVLGVWPQPLISIVRLAMPLM.

14 helical membrane-spanning segments follow: residues 8–28 (LIALLPLLIVGLTVVVVMLSI), 35–55 (FLNATLSVIGLNAALVSLWFV), 71–91 (GFAMLYTGLVLLASLATCTFA), 105–125 (FYLLVLIAALGGILLANANHL), 127–147 (SLFLGIELISLPLFGLVGYAF), 159–179 (YTILSAAASSFLLFGMALVYA), 203–223 (LLAGFGLMIVGLGFKLSLVPF), 235–255 (PAPVSTFLATASKIVIFGVVM), 271–291 (VVLAIIAFASIIFGNLMALSQ), 297–317 (LLGYSSISHLGYLLVALIALQ), 326–346 (VGVYLAGYLFSSLGAFGVVSL), 373–393 (AAVMTVMMLSLAGIPMTLGFI), 408–430 (WWLVGAVVVGSAIGLYYYLRVAV), and 455–475 (IVVLISALLVLVLGVWPQPLI).

The protein belongs to the complex I subunit 2 family. In terms of assembly, NDH-1 is composed of 13 different subunits. Subunits NuoA, H, J, K, L, M, N constitute the membrane sector of the complex.

The protein resides in the cell inner membrane. It catalyses the reaction a quinone + NADH + 5 H(+)(in) = a quinol + NAD(+) + 4 H(+)(out). Functionally, NDH-1 shuttles electrons from NADH, via FMN and iron-sulfur (Fe-S) centers, to quinones in the respiratory chain. The immediate electron acceptor for the enzyme in this species is believed to be ubiquinone. Couples the redox reaction to proton translocation (for every two electrons transferred, four hydrogen ions are translocated across the cytoplasmic membrane), and thus conserves the redox energy in a proton gradient. The chain is NADH-quinone oxidoreductase subunit N from Shigella dysenteriae serotype 1 (strain Sd197).